Consider the following 309-residue polypeptide: Cytochrome c biogenesis protein CcsA (309 aa).

Transmembrane regions (helical) follow at residues 18–38, 48–68, 73–93, 102–122, 148–168, 216–236, 250–267, and 279–299; these read LGLL…GAVF, LITI…WSIS, ISNL…GQLL, IIPS…CFVL, VMLS…VLFI, SILV…VWAN, TWAF…HMRI, and LAST…FLGI.

It belongs to the CcmF/CycK/Ccl1/NrfE/CcsA family. In terms of assembly, may interact with ccs1.

The protein localises to the cellular thylakoid membrane. Its function is as follows. Required during biogenesis of c-type cytochromes (cytochrome c6 and cytochrome f) at the step of heme attachment. The protein is Cytochrome c biogenesis protein CcsA of Prochlorococcus marinus (strain AS9601).